A 265-amino-acid polypeptide reads, in one-letter code: 5'-nucleotidase SurE (265 aa).

A divalent metal cation-binding residues include Asp11, Asp12, Ser43, and Asn101.

Belongs to the SurE nucleotidase family. The cofactor is a divalent metal cation.

The protein resides in the cytoplasm. The enzyme catalyses a ribonucleoside 5'-phosphate + H2O = a ribonucleoside + phosphate. Its function is as follows. Nucleotidase that shows phosphatase activity on nucleoside 5'-monophosphates. The chain is 5'-nucleotidase SurE from Synechococcus sp. (strain CC9311).